A 254-amino-acid chain; its full sequence is UPF0246 protein FTM_0239 (254 aa).

This sequence belongs to the UPF0246 family.

The chain is UPF0246 protein FTM_0239 from Francisella tularensis subsp. mediasiatica (strain FSC147).